The sequence spans 149 residues: Transcriptional regulator MraZ (149 aa).

SpoVT-AbrB domains lie at 9–52 and 82–125; these read AYSY…PRAQ and AQEV…DRAR.

It belongs to the MraZ family. In terms of assembly, forms oligomers.

It is found in the cytoplasm. It localises to the nucleoid. In Treponema pallidum subsp. pallidum (strain SS14), this protein is Transcriptional regulator MraZ.